Reading from the N-terminus, the 233-residue chain is Large ribosomal subunit protein uL1 (233 aa).

The protein belongs to the universal ribosomal protein uL1 family. Part of the 50S ribosomal subunit.

Binds directly to 23S rRNA. The L1 stalk is quite mobile in the ribosome, and is involved in E site tRNA release. In terms of biological role, protein L1 is also a translational repressor protein, it controls the translation of the L11 operon by binding to its mRNA. The sequence is that of Large ribosomal subunit protein uL1 from Vibrio cholerae serotype O1 (strain ATCC 39541 / Classical Ogawa 395 / O395).